A 209-amino-acid polypeptide reads, in one-letter code: Nascent polypeptide-associated complex subunit alpha-like protein 5 (209 aa).

A disordered region spans residues 23 to 71 (EKEDDVVVEDVKDGEEEDDDEDDEDVEVEGEGGNENAKQSRSEKKSRKA). A compositionally biased stretch (acidic residues) spans 25-54 (EDDVVVEDVKDGEEEDDDEDDEDVEVEGEG). The region spanning 62-127 (SRSEKKSRKA…AKVDDLSSQL (66 aa)) is the NAC-A/B domain. The UBA domain maps to 170–207 (VEARDIDLVMTQAGVSKAKAVSALKANDGDIVSAIMEL).

It belongs to the NAC-alpha family.

Its function is as follows. May promote appropriate targeting of ribosome-nascent polypeptide complexes. The chain is Nascent polypeptide-associated complex subunit alpha-like protein 5 from Arabidopsis thaliana (Mouse-ear cress).